The chain runs to 256 residues: Imidazole glycerol phosphate synthase subunit HisF (256 aa).

Residues Asp11 and Asp130 contribute to the active site.

Belongs to the HisA/HisF family. In terms of assembly, heterodimer of HisH and HisF.

It is found in the cytoplasm. It carries out the reaction 5-[(5-phospho-1-deoxy-D-ribulos-1-ylimino)methylamino]-1-(5-phospho-beta-D-ribosyl)imidazole-4-carboxamide + L-glutamine = D-erythro-1-(imidazol-4-yl)glycerol 3-phosphate + 5-amino-1-(5-phospho-beta-D-ribosyl)imidazole-4-carboxamide + L-glutamate + H(+). The protein operates within amino-acid biosynthesis; L-histidine biosynthesis; L-histidine from 5-phospho-alpha-D-ribose 1-diphosphate: step 5/9. Its function is as follows. IGPS catalyzes the conversion of PRFAR and glutamine to IGP, AICAR and glutamate. The HisF subunit catalyzes the cyclization activity that produces IGP and AICAR from PRFAR using the ammonia provided by the HisH subunit. This is Imidazole glycerol phosphate synthase subunit HisF from Cupriavidus metallidurans (strain ATCC 43123 / DSM 2839 / NBRC 102507 / CH34) (Ralstonia metallidurans).